Here is a 361-residue protein sequence, read N- to C-terminus: NAD(P)H-quinone oxidoreductase subunit 1, chloroplastic (361 aa).

7 helical membrane-spanning segments follow: residues 28–48 (IWVL…VLVI), 99–119 (FTIG…VIPF), 128–148 (LSIG…GLLM), 249–269 (YSGI…LVSS), 270–290 (LFVT…LFVP), 301–321 (TIIC…ISIA), and 341–361 (FLLP…LLSL).

It belongs to the complex I subunit 1 family. In terms of assembly, NDH is composed of at least 16 different subunits, 5 of which are encoded in the nucleus.

It localises to the plastid. It is found in the chloroplast thylakoid membrane. It carries out the reaction a plastoquinone + NADH + (n+1) H(+)(in) = a plastoquinol + NAD(+) + n H(+)(out). It catalyses the reaction a plastoquinone + NADPH + (n+1) H(+)(in) = a plastoquinol + NADP(+) + n H(+)(out). NDH shuttles electrons from NAD(P)H:plastoquinone, via FMN and iron-sulfur (Fe-S) centers, to quinones in the photosynthetic chain and possibly in a chloroplast respiratory chain. The immediate electron acceptor for the enzyme in this species is believed to be plastoquinone. Couples the redox reaction to proton translocation, and thus conserves the redox energy in a proton gradient. This Jasminum nudiflorum (Winter jasmine) protein is NAD(P)H-quinone oxidoreductase subunit 1, chloroplastic.